The primary structure comprises 245 residues: Acetylglutamate kinase (245 aa).

Substrate contacts are provided by residues Gly41–Gly42, Arg63, and Asn156.

Belongs to the acetylglutamate kinase family. ArgB subfamily.

Its subcellular location is the cytoplasm. It catalyses the reaction N-acetyl-L-glutamate + ATP = N-acetyl-L-glutamyl 5-phosphate + ADP. The protein operates within amino-acid biosynthesis; L-arginine biosynthesis; N(2)-acetyl-L-ornithine from L-glutamate: step 2/4. Catalyzes the ATP-dependent phosphorylation of N-acetyl-L-glutamate. This chain is Acetylglutamate kinase, found in Streptococcus gordonii (strain Challis / ATCC 35105 / BCRC 15272 / CH1 / DL1 / V288).